The following is an 85-amino-acid chain: Glutaredoxin 1 (85 aa).

One can recognise a Glutaredoxin domain in the interval 1-85; sequence MQTVIFGRSG…AAWVKENLDA (85 aa). The cysteines at positions 11 and 14 are disulfide-linked.

The protein belongs to the glutaredoxin family. Monomer.

The disulfide bond functions as an electron carrier in the glutathione-dependent synthesis of deoxyribonucleotides by the enzyme ribonucleotide reductase. In addition, it is also involved in reducing some disulfides in a coupled system with glutathione reductase. The chain is Glutaredoxin 1 (grxA) from Shigella flexneri.